We begin with the raw amino-acid sequence, 701 residues long: DUF724 domain-containing protein 6 (701 aa).

2 disordered regions span residues 299-353 (MKTK…KRAN) and 374-452 (VEPV…DESC). Residues 326–340 (LNLEKSAETLTKAES) are compositionally biased toward basic and acidic residues. A compositionally biased stretch (polar residues) spans 381–399 (RVRTATPLKQTKADTQGKS). Basic and acidic residues-rich tracts occupy residues 403–412 (KTLEPMRDEN), 421–430 (KVLEEKNSEK), and 437–449 (RQEE…KETD). The region spanning 514 to 700 (LPFAKKSPFW…LEFQSTASAP (187 aa)) is the DUF724 domain. Positions 626-670 (LEKKIEAGEIEGHTYEEEMAELELKILELKRQQVVAKEMKEATDK) form a coiled coil.

Expressed in roots, stems and flowers.

It is found in the nucleus. May be involved in the polar growth of plant cells via transportation of RNAs. The chain is DUF724 domain-containing protein 6 from Arabidopsis thaliana (Mouse-ear cress).